Consider the following 325-residue polypeptide: Gamma-hemolysin component B (325 aa).

The first 25 residues, 1–25 (MNMNKLVKSSVATSMALLLLSNTAN), serve as a signal peptide directing secretion.

Belongs to the aerolysin family. As to quaternary structure, toxicity requires sequential binding and synergistic association of a class S and a class F component which form heterooligomeric complexes. HlgB (class F) associates with either hlgA thus forming an AB toxin or with hlgC thus forming a CB toxin. Interacts with host AMFR.

Toxin that seems to act by forming pores in the membrane of the cell. Has a hemolytic and a leucotoxic activity. Promotes host AMFR-mediated inflammation by mediating 'Lys-27'-linked ubiquitination of TAB3, TAK1-TAB3 complex formation and phosphorylation of TAK1/MAP3K7. In turn, activates host NF-kappa-B signaling pathway. This Staphylococcus aureus (strain MRSA252) protein is Gamma-hemolysin component B (hlgB).